The chain runs to 343 residues: N-acetyl-gamma-glutamyl-phosphate reductase (343 aa).

The active site involves C147.

It belongs to the NAGSA dehydrogenase family. Type 1 subfamily.

It is found in the cytoplasm. It catalyses the reaction N-acetyl-L-glutamate 5-semialdehyde + phosphate + NADP(+) = N-acetyl-L-glutamyl 5-phosphate + NADPH + H(+). Its pathway is amino-acid biosynthesis; L-arginine biosynthesis; N(2)-acetyl-L-ornithine from L-glutamate: step 3/4. Functionally, catalyzes the NADPH-dependent reduction of N-acetyl-5-glutamyl phosphate to yield N-acetyl-L-glutamate 5-semialdehyde. This Listeria welshimeri serovar 6b (strain ATCC 35897 / DSM 20650 / CCUG 15529 / CIP 8149 / NCTC 11857 / SLCC 5334 / V8) protein is N-acetyl-gamma-glutamyl-phosphate reductase.